The primary structure comprises 424 residues: PDZ and LIM domain protein 7 (424 aa).

The PDZ domain maps to 1–85; it reads MDSFKVVLEG…RLSLSLSRAQ (85 aa). Phosphoserine is present on Ser78. A compositionally biased stretch (polar residues) spans 81-98; the sequence is LSRAQPAQSKPQKVQTPD. The tract at residues 81–221 is disordered; that stretch reads LSRAQPAQSK…HTQPATPTPM (141 aa). At Thr96 the chain carries Phosphothreonine. Over residues 110-123 the composition is skewed to basic and acidic residues; that stretch reads SKQRLMEDTEDWRP. Positions 174 to 187 are enriched in pro residues; the sequence is EPWPGPTTPSPTSR. The segment covering 204–221 has biased composition (polar residues); it reads KTSTVLTRHTQPATPTPM. LIM zinc-binding domains are found at residues 247 to 305, 306 to 365, and 366 to 424; these read PVCH…VRYA, PSCA…MFGT, and KCRG…FSHV.

As to quaternary structure, binds via its LIM zinc-binding 3 domain (LIM 3) domain to endocytic codes of INSR, but not with those of IGF1R, LDLR, TFRC, or EGFR. Interacts with various PKC isoforms through the LIM zinc-binding domains. Binds to RET in a phosphorylation-independent manner via its LIM zinc-binding 2 domain (LIM 2). Probably part of a complex with SHC and the RET dimer. Interacts with TPM2, TBX4 and TBX5.

It localises to the cytoplasm. Its subcellular location is the cytoskeleton. May function as a scaffold on which the coordinated assembly of proteins can occur. May play a role as an adapter that, via its PDZ domain, localizes LIM-binding proteins to actin filaments of both skeletal muscle and nonmuscle tissues. Involved in both of the two fundamental mechanisms of bone formation, direct bone formation (e.g. embryonic flat bones mandible and cranium), and endochondral bone formation (e.g. embryonic long bone development). Plays a role during fracture repair. Involved in BMP6 signaling pathway. The sequence is that of PDZ and LIM domain protein 7 (PDLIM7) from Bos taurus (Bovine).